Consider the following 249-residue polypeptide: Proteasome subunit alpha type-7-B (249 aa).

Belongs to the peptidase T1A family. The 26S proteasome consists of a 20S proteasome core and two 19S regulatory subunits. The 20S proteasome core is composed of 28 subunits that are arranged in four stacked rings, resulting in a barrel-shaped structure. The two end rings are each formed by seven alpha subunits, and the two central rings are each formed by seven beta subunits. The catalytic chamber with the active sites is on the inside of the barrel.

Its subcellular location is the cytoplasm. It localises to the nucleus. Functionally, the proteasome is a multicatalytic proteinase complex which is characterized by its ability to cleave peptides with Arg, Phe, Tyr, Leu, and Glu adjacent to the leaving group at neutral or slightly basic pH. The proteasome has an ATP-dependent proteolytic activity. In Oryza sativa subsp. indica (Rice), this protein is Proteasome subunit alpha type-7-B (PAD1).